Reading from the N-terminus, the 595-residue chain is Inactive metallocarboxypeptidase ecm14 (595 aa).

Positions 1–22 (MYRPDHVFVILCAVFFTGQVTA) are cleaved as a signal peptide. Positions 23–178 (VPAGTGITHP…MIYESQYPSR (156 aa)) are excised as a propeptide. Residues 206–527 (NYQPFPVILQ…NSVLVLGHFL (322 aa)) enclose the Peptidase M14 domain. Residues H270 and E273 each contribute to the Zn(2+) site. Substrate is bound by residues 270–273 (HARE), R328, and 345–346 (DR). The cysteines at positions 339 and 362 are disulfide-linked. N-linked (GlcNAc...) asparagine glycosylation is present at N386. Position 402 (H402) interacts with Zn(2+). Residue 403-404 (SY) participates in substrate binding.

Belongs to the peptidase M14 family. Requires Zn(2+) as cofactor.

Its subcellular location is the vacuole. It is found in the secreted. Functionally, inactive carboxypeptidase that may play a role in cell wall organization and biogenesis. In Talaromyces marneffei (strain ATCC 18224 / CBS 334.59 / QM 7333) (Penicillium marneffei), this protein is Inactive metallocarboxypeptidase ecm14 (ecm14).